Reading from the N-terminus, the 157-residue chain is Succinate dehydrogenase assembly factor 2-B, mitochondrial (157 aa).

The N-terminal 22 residues, 1–22, are a transit peptide targeting the mitochondrion; sequence MLSQWFRGRHLVVRSALFSRRR.

It belongs to the SDHAF2 family. Interacts with the flavoprotein subunit within the SDH catalytic dimer.

Its subcellular location is the mitochondrion matrix. In terms of biological role, plays an essential role in the assembly of succinate dehydrogenase (SDH), an enzyme complex (also referred to as respiratory complex II) that is a component of both the tricarboxylic acid (TCA) cycle and the mitochondrial electron transport chain, and which couples the oxidation of succinate to fumarate with the reduction of ubiquinone (coenzyme Q) to ubiquinol. Required for flavinylation (covalent attachment of FAD) of the flavoprotein subunit of the SDH catalytic dimer. In Drosophila mojavensis (Fruit fly), this protein is Succinate dehydrogenase assembly factor 2-B, mitochondrial.